A 71-amino-acid polypeptide reads, in one-letter code: Protein KleB (71 aa).

A DNA-binding region (H-T-H motif) is located at residues 9 to 28; it reads IETCCRRCGKSIRTLSHTII.

The sequence is that of Protein KleB (kleB) from Escherichia coli.